Consider the following 229-residue polypeptide: 2-C-methyl-D-erythritol 4-phosphate cytidylyltransferase (229 aa).

The protein belongs to the IspD/TarI cytidylyltransferase family. IspD subfamily.

The enzyme catalyses 2-C-methyl-D-erythritol 4-phosphate + CTP + H(+) = 4-CDP-2-C-methyl-D-erythritol + diphosphate. It functions in the pathway isoprenoid biosynthesis; isopentenyl diphosphate biosynthesis via DXP pathway; isopentenyl diphosphate from 1-deoxy-D-xylulose 5-phosphate: step 2/6. Functionally, catalyzes the formation of 4-diphosphocytidyl-2-C-methyl-D-erythritol from CTP and 2-C-methyl-D-erythritol 4-phosphate (MEP). In Neisseria meningitidis serogroup B (strain ATCC BAA-335 / MC58), this protein is 2-C-methyl-D-erythritol 4-phosphate cytidylyltransferase.